A 491-amino-acid polypeptide reads, in one-letter code: MPGARDALCHQALQLLAELCARGALEHDSCQDFIYHLRDRARPRLRDPDISVSLLTLVVTACGLALFGVSLFVSWKLCWVPWRERGLFSGSKDNNQEPLNYTDTETNEQENSEDFLDPPTPCPDSSMKISHTSPDIPLSTQPGGQENCAHAVRVQRQVTEPTPSARHNSIRRQLNLSNPDFNIQQLQRQEQLTGIGRIKPELYKQRSLDNDDGRRSNSKACGKLNFILKYDCDLEQLIVKIHKAVNLPAKDFSGTSDPYVKIYLLPDRKTKHQTKVHRKTLNPVFDEVFLFPVHYNDLEARKLHFSVYDFDRFSRHDLIGQVVVDHFFDLADFPRECILWKDIEYVTNDNVDLGELMFSLCYLPTAGRLTITIIKARNLKAMDITGASDPYVKVSLMCDGRRLKKRKTSTKRNTLNPVYNEAIVFDVPPESIDQIHLSIAVMDYDRVGHNEVIGVCQVGNEAERLGRDHWSEMLSYPRKPIAHWHSLMEKR.

Residues Met-1–Val-52 lie on the Vesicular side of the membrane. The interval Cys-9 to Gln-31 is cysteine motif. Residues Ser-53–Val-73 form a helical membrane-spanning segment. Topologically, residues Ser-74–Arg-491 are cytoplasmic. Positions Ser-91–Thr-104 are enriched in polar residues. The interval Ser-91–Asn-147 is disordered. Over residues Glu-105–Leu-116 the composition is skewed to acidic residues. Residues Met-127–Gly-144 show a composition bias toward polar residues. Ser-177 bears the Phosphoserine mark. C2 domains lie at Ala-220 to Lys-341 and Asp-352 to His-485. Ca(2+) is bound by residues Asp-251, Asp-257, Asp-309, Phe-310, Asp-311, Ser-314, Asp-317, Asp-383, Asp-389, Asp-443, and Asp-445.

It belongs to the synaptotagmin family. As to quaternary structure, homodimer; disulfide-linked via the cysteine motif. Can also form heterodimers with SYT3, SYT6, SYT7 and SYT10. Interacts with DNAJC5 and SNAP25, but not with HSC70. The interaction with DNAJC5 is stimulated tenfold in presence of calcium while the interaction with SNAP25 is inhibited. Ca(2+) serves as cofactor.

It localises to the cytoplasmic vesicle. Its subcellular location is the secretory vesicle. The protein resides in the synaptic vesicle membrane. Functionally, may be involved in Ca(2+)-dependent exocytosis of secretory vesicles through Ca(2+) and phospholipid binding to the C2 domain or may serve as Ca(2+) sensors in the process of vesicular trafficking and exocytosis. This chain is Synaptotagmin-9 (Syt9), found in Mus musculus (Mouse).